Consider the following 93-residue polypeptide: Integration host factor subunit beta (93 aa).

The protein belongs to the bacterial histone-like protein family. Heterodimer of an alpha and a beta chain.

Functionally, this protein is one of the two subunits of integration host factor, a specific DNA-binding protein that functions in genetic recombination as well as in transcriptional and translational control. This chain is Integration host factor subunit beta, found in Tolumonas auensis (strain DSM 9187 / NBRC 110442 / TA 4).